The sequence spans 357 residues: Peptide chain release factor 1 (357 aa).

An N5-methylglutamine modification is found at glutamine 236.

This sequence belongs to the prokaryotic/mitochondrial release factor family. Post-translationally, methylated by PrmC. Methylation increases the termination efficiency of RF1.

The protein resides in the cytoplasm. Functionally, peptide chain release factor 1 directs the termination of translation in response to the peptide chain termination codons UAG and UAA. The sequence is that of Peptide chain release factor 1 from Mycobacterium avium (strain 104).